We begin with the raw amino-acid sequence, 699 residues long: Tectonic-like complex member Mks1 (699 aa).

2 disordered regions span residues 101–121 (RRSPISQHEGEMEKDKNEGEI) and 373–396 (DGFSEEADGEDEQELGDGLPIEED). Positions 108–119 (HEGEMEKDKNEG) are enriched in basic and acidic residues. The C2 B9-type domain occupies 434–560 (KRVSLLLELQ…RLQCIRPLGN (127 aa)). The tract at residues 632–661 (LELGNDSSDDGDSNDDDVRSSSNPDTSRAT) is disordered.

Probable component of the tectonic-like complex (also named MKS complex), composed of B9d1, B9d2, Cc2d2a, Mks1 and tctn. Expressed in chordotonal neurons in the antennae (at protein level). Expressed in spermatids (at protein level).

The protein localises to the cytoplasm. It is found in the cytoskeleton. The protein resides in the cilium basal body. Its subcellular location is the microtubule organizing center. It localises to the centrosome. The protein localises to the centriole. In terms of biological role, probable component of the tectonic-like complex (also named MKS complex), a complex localized at the transition zone of primary cilia. Required for ciliary structure and function. This Drosophila melanogaster (Fruit fly) protein is Tectonic-like complex member Mks1.